A 386-amino-acid chain; its full sequence is Lipoyl synthase, mitochondrial (386 aa).

The [4Fe-4S] cluster site is built by C115, C120, C126, C146, C150, C153, and S362. One can recognise a Radical SAM core domain in the interval 131–351 (ETGTATATIM…QKLGMEMGFR (221 aa)).

Belongs to the radical SAM superfamily. Lipoyl synthase family. Requires [4Fe-4S] cluster as cofactor.

It localises to the mitochondrion. It carries out the reaction [[Fe-S] cluster scaffold protein carrying a second [4Fe-4S](2+) cluster] + N(6)-octanoyl-L-lysyl-[protein] + 2 oxidized [2Fe-2S]-[ferredoxin] + 2 S-adenosyl-L-methionine + 4 H(+) = [[Fe-S] cluster scaffold protein] + N(6)-[(R)-dihydrolipoyl]-L-lysyl-[protein] + 4 Fe(3+) + 2 hydrogen sulfide + 2 5'-deoxyadenosine + 2 L-methionine + 2 reduced [2Fe-2S]-[ferredoxin]. It participates in protein modification; protein lipoylation via endogenous pathway; protein N(6)-(lipoyl)lysine from octanoyl-[acyl-carrier-protein]: step 2/2. Functionally, catalyzes the radical-mediated insertion of two sulfur atoms into the C-6 and C-8 positions of the octanoyl moiety bound to the lipoyl domains of lipoate-dependent enzymes, thereby converting the octanoylated domains into lipoylated derivatives. This Picea sitchensis (Sitka spruce) protein is Lipoyl synthase, mitochondrial.